The chain runs to 159 residues: SsrA-binding protein (159 aa).

Residues 134–159 (KLHDKRETSKERDWNRQKNRLLKERG) are disordered. Positions 137–159 (DKRETSKERDWNRQKNRLLKERG) are enriched in basic and acidic residues.

Belongs to the SmpB family.

The protein localises to the cytoplasm. Functionally, required for rescue of stalled ribosomes mediated by trans-translation. Binds to transfer-messenger RNA (tmRNA), required for stable association of tmRNA with ribosomes. tmRNA and SmpB together mimic tRNA shape, replacing the anticodon stem-loop with SmpB. tmRNA is encoded by the ssrA gene; the 2 termini fold to resemble tRNA(Ala) and it encodes a 'tag peptide', a short internal open reading frame. During trans-translation Ala-aminoacylated tmRNA acts like a tRNA, entering the A-site of stalled ribosomes, displacing the stalled mRNA. The ribosome then switches to translate the ORF on the tmRNA; the nascent peptide is terminated with the 'tag peptide' encoded by the tmRNA and targeted for degradation. The ribosome is freed to recommence translation, which seems to be the essential function of trans-translation. The protein is SsrA-binding protein of Rhizobium meliloti (strain 1021) (Ensifer meliloti).